The sequence spans 156 residues: 6,7-dimethyl-8-ribityllumazine synthase (156 aa).

5-amino-6-(D-ribitylamino)uracil-binding positions include Phe-23, 57–59 (SWE), and 81–83 (AVV). 86 to 87 (ET) contacts (2S)-2-hydroxy-3-oxobutyl phosphate. His-89 acts as the Proton donor in catalysis. Phe-114 contributes to the 5-amino-6-(D-ribitylamino)uracil binding site. Arg-128 provides a ligand contact to (2S)-2-hydroxy-3-oxobutyl phosphate.

Belongs to the DMRL synthase family.

It catalyses the reaction (2S)-2-hydroxy-3-oxobutyl phosphate + 5-amino-6-(D-ribitylamino)uracil = 6,7-dimethyl-8-(1-D-ribityl)lumazine + phosphate + 2 H2O + H(+). The protein operates within cofactor biosynthesis; riboflavin biosynthesis; riboflavin from 2-hydroxy-3-oxobutyl phosphate and 5-amino-6-(D-ribitylamino)uracil: step 1/2. Functionally, catalyzes the formation of 6,7-dimethyl-8-ribityllumazine by condensation of 5-amino-6-(D-ribitylamino)uracil with 3,4-dihydroxy-2-butanone 4-phosphate. This is the penultimate step in the biosynthesis of riboflavin. The protein is 6,7-dimethyl-8-ribityllumazine synthase of Salinibacter ruber (strain DSM 13855 / M31).